A 315-amino-acid chain; its full sequence is DNA-directed RNA polymerase subunit alpha (315 aa).

The interval 1–228 is alpha N-terminal domain (alpha-NTD); it reads MLEIEKPKIE…EHLRLFIGLT (228 aa). The interval 245–315 is alpha C-terminal domain (alpha-CTD); the sequence is KDKILEMTIE…LGLGFRKADD (71 aa).

It belongs to the RNA polymerase alpha chain family. In terms of assembly, homodimer. The RNAP catalytic core consists of 2 alpha, 1 beta, 1 beta' and 1 omega subunit. When a sigma factor is associated with the core the holoenzyme is formed, which can initiate transcription.

It carries out the reaction RNA(n) + a ribonucleoside 5'-triphosphate = RNA(n+1) + diphosphate. In terms of biological role, DNA-dependent RNA polymerase catalyzes the transcription of DNA into RNA using the four ribonucleoside triphosphates as substrates. The protein is DNA-directed RNA polymerase subunit alpha of Desulfitobacterium hafniense (strain DSM 10664 / DCB-2).